Consider the following 147-residue polypeptide: Hemoglobin subunit beta-1 (147 aa).

Positions 3-147 (EWTAAERRHV…VVSALGRQYH (145 aa)) constitute a Globin domain. Histidine 64 and histidine 93 together coordinate heme b.

The protein belongs to the globin family. As to quaternary structure, hb 1 is a heterotetramer of two alpha-1 and two beta-1 chains. As to expression, red blood cells.

Involved in oxygen transport from gills to the various peripheral tissues. In Gadus morhua (Atlantic cod), this protein is Hemoglobin subunit beta-1 (hbb1).